The sequence spans 609 residues: All-trans-retinol 13,14-reductase (609 aa).

A signal peptide spans 1 to 21 (MWITALLLVVLLLVVVHRVYV).

It belongs to the carotenoid/retinoid oxidoreductase family. CrtISO subfamily. The cofactor is NAD(+). NADP(+) is required as a cofactor. FAD serves as cofactor. Highly expressed in liver, kidney and heart.

The protein resides in the endoplasmic reticulum membrane. It catalyses the reaction all-trans-13,14-dihydroretinol + A = all-trans-retinol + AH2. In terms of biological role, catalyzes the saturation of all-trans-retinol to all-trans-13,14-dihydroretinol. Does not exhibit any activity toward all-trans-retinoic acid, nor 9-cis, 11-cis or 13-cis-retinol isomers. May play a role in the metabolism of vitamin A. Independently of retinol conversion, may regulate liver metabolism upstream of MLXIPL/ChREBP. May play a role in adipocyte differentiation. This is All-trans-retinol 13,14-reductase (Retsat) from Rattus norvegicus (Rat).